A 466-amino-acid polypeptide reads, in one-letter code: MAAISRVIDLFTSDQEYIGKTVRAQGWVRTKRDSKAGVSFIELNDGSCLRNLQVVADQGHPEYRQLLESITTGCAVMVEGSIAYSPGKGQTIELKADRITLYGTADPAVYPLQKKRHSFEFLRQIGHLRPRTNTIGAVSRVRNRLSYAIHQFFQDRGFYYIHTPIITASDCEGAGEMFRVTTLDAQNAPAKVPEEVYRADFFGKPAFLTVSGQLQAEIYALALGRVYTFGPTFRAENSNTSRHLAEFWMVEPEMAFCDLEGDLEIAQALIRHLIGVALQDCAEDLDFFTRFIEPTLRGTLETVAFSPFETVTYTEAVRILKESGENFEFPVEWGNDLQAEHERYLTEKVFRKPAAVIHFPRALKPFYMRVNDDGNTVAAMDILVPGTGEIIGGSQREERPDILVEQMRLKSVAPEDYKWYLDLREFGSVPHAGFGMGLERLVQFVTGLPNIREVIPFPRTPGHAEF.

It belongs to the class-II aminoacyl-tRNA synthetase family. Homodimer.

It localises to the cytoplasm. It carries out the reaction tRNA(Asn) + L-asparagine + ATP = L-asparaginyl-tRNA(Asn) + AMP + diphosphate + H(+). In Syntrophobacter fumaroxidans (strain DSM 10017 / MPOB), this protein is Asparagine--tRNA ligase.